A 221-amino-acid polypeptide reads, in one-letter code: Elongation factor Ts (221 aa).

The tract at residues 82–85 (TDFV) is involved in Mg(2+) ion dislocation from EF-Tu.

Belongs to the EF-Ts family.

The protein localises to the cytoplasm. Associates with the EF-Tu.GDP complex and induces the exchange of GDP to GTP. It remains bound to the aminoacyl-tRNA.EF-Tu.GTP complex up to the GTP hydrolysis stage on the ribosome. The polypeptide is Elongation factor Ts (Synechococcus elongatus (strain ATCC 33912 / PCC 7942 / FACHB-805) (Anacystis nidulans R2)).